Consider the following 503-residue polypeptide: N-fatty-acyl-amino acid synthase/hydrolase PM20D1 (503 aa).

The first 24 residues, 1-24 (MAELLASLPAWAAVLLLFFATVSG), serve as a signal peptide directing secretion. An N-linked (GlcNAc...) asparagine glycan is attached at asparagine 72. Histidine 125 is a binding site for Zn(2+). Residue aspartate 127 is part of the active site. Residue aspartate 157 participates in Zn(2+) binding. Glutamate 191 functions as the Proton acceptor in the catalytic mechanism. 2 residues coordinate Zn(2+): glutamate 192 and aspartate 218. N-linked (GlcNAc...) asparagine glycosylation occurs at asparagine 443. Histidine 465 is a Zn(2+) binding site.

This sequence belongs to the peptidase M20A family. Zn(2+) is required as a cofactor. As to expression, in addition to being detected in blood (at protein level), PM20D1 is also highly expressed in other tissues including brown adipocytes, liver and kidney. It is also expressed in small intestine, large intestine, heart and pancreas.

It localises to the secreted. The enzyme catalyses an N-acyl-L-amino acid + H2O = an L-alpha-amino acid + a carboxylate. It catalyses the reaction an N-acyl-aromatic L-alpha-amino acid + H2O = an aromatic L-alpha-amino acid + a carboxylate. It carries out the reaction N-(5Z,8Z,11Z,14Z)-eicosatetraenoyl-glycine + H2O = (5Z,8Z,11Z,14Z)-eicosatetraenoate + glycine. The catalysed reaction is N-hexadecanoyl-L-phenylalanine + H2O = hexadecanoate + L-phenylalanine. The enzyme catalyses N-octadecanoyl-L-phenylalanine + H2O = octadecanoate + L-phenylalanine. It catalyses the reaction N-(4Z,7Z,10Z,13Z,16Z,19Z-docosahexaenoyl)-L-phenylalanine + H2O = (4Z,7Z,10Z,13Z,16Z,19Z)-docosahexaenoate + L-phenylalanine. It carries out the reaction N-(9Z-octadecenoyl)-L-asparagine + H2O = L-asparagine + (9Z)-octadecenoate. The catalysed reaction is (9Z)-octadecenoate + glycine = N-(9Z-octadecenoyl)glycine + H2O. The enzyme catalyses N-(9Z-octadecenoyl)-L-lysine + H2O = L-lysine + (9Z)-octadecenoate. It catalyses the reaction N-(9Z-octadecenoyl)-L-methionine + H2O = (9Z)-octadecenoate + L-methionine. It carries out the reaction N-(9Z-octadecenoyl)-L-serine + H2O = L-serine + (9Z)-octadecenoate. The catalysed reaction is N-(9Z-octadecenoyl)-L-tryptophan + H2O = L-tryptophan + (9Z)-octadecenoate. The enzyme catalyses N-(9Z-octadecenoyl)-L-tyrosine + H2O = L-tyrosine + (9Z)-octadecenoate. It catalyses the reaction N-(9Z-octadecenoyl)-L-glutamine + H2O = L-glutamine + (9Z)-octadecenoate. It carries out the reaction N-(5Z,8Z,11Z,14Z-eicosatetraenoyl)-L-serine + H2O = (5Z,8Z,11Z,14Z)-eicosatetraenoate + L-serine. The catalysed reaction is (5Z,8Z,11Z,14Z)-eicosatetraenoate + L-phenylalanine = N-(5Z,8Z,11Z,14Z-eicosatetraenoyl)-L-phenylalanine + H2O. The enzyme catalyses N-(9Z-octadecenoyl)-L-leucine + H2O = L-leucine + (9Z)-octadecenoate. It catalyses the reaction L-phenylalanine + (9Z)-octadecenoate = N-(9Z-octadecenoyl)-L-phenylalanine + H2O. The protein operates within amino-acid metabolism. It functions in the pathway energy metabolism; electron transfer. Its pathway is lipid metabolism; fatty acid metabolism. Its activity is regulated as follows. Lipoproteins are powerful coactivators of PM20D1 activity in vitro and NAA biosynthesis in vivo. Functionally, secreted enzyme that regulates the endogenous N-fatty acyl amino acid (NAAs) tissue and circulating levels by functioning as a bidirectional NAA synthase/hydrolase. It condenses free fatty acids and free amino acids to generate NAAs and bidirectionally catalyzes the reverse hydrolysis reaction. Some of these NAAs stimulate oxidative metabolism via mitochondrial uncoupling, increasing energy expenditure in a UPC1-independent manner. Thereby, this secreted protein may indirectly regulate whole body energy expenditure. PM20D1 circulates in tight association with both low- and high-density (LDL and HDL,respectively) lipoprotein particles. In Mus musculus (Mouse), this protein is N-fatty-acyl-amino acid synthase/hydrolase PM20D1.